A 264-amino-acid chain; its full sequence is 4-hydroxy-tetrahydrodipicolinate reductase (264 aa).

NAD(+) is bound at residue 10-15; that stretch reads GCLGRQ. Position 37 (Arg37) interacts with NADP(+). NAD(+) contacts are provided by residues 99–101 and 121–124; these read GTT and SANL. His153 acts as the Proton donor/acceptor in catalysis. Residue His154 coordinates (S)-2,3,4,5-tetrahydrodipicolinate. Catalysis depends on Lys157, which acts as the Proton donor. 163 to 164 is a (S)-2,3,4,5-tetrahydrodipicolinate binding site; the sequence is GT.

This sequence belongs to the DapB family.

It is found in the cytoplasm. The catalysed reaction is (S)-2,3,4,5-tetrahydrodipicolinate + NAD(+) + H2O = (2S,4S)-4-hydroxy-2,3,4,5-tetrahydrodipicolinate + NADH + H(+). The enzyme catalyses (S)-2,3,4,5-tetrahydrodipicolinate + NADP(+) + H2O = (2S,4S)-4-hydroxy-2,3,4,5-tetrahydrodipicolinate + NADPH + H(+). It participates in amino-acid biosynthesis; L-lysine biosynthesis via DAP pathway; (S)-tetrahydrodipicolinate from L-aspartate: step 4/4. In terms of biological role, catalyzes the conversion of 4-hydroxy-tetrahydrodipicolinate (HTPA) to tetrahydrodipicolinate. The chain is 4-hydroxy-tetrahydrodipicolinate reductase from Ehrlichia ruminantium (strain Gardel).